Here is an 838-residue protein sequence, read N- to C-terminus: Extragenic suppressor of kinetochore protein 1 (838 aa).

Residues serine 411 and serine 418 each carry the phosphoserine modification. The tract at residues 411-468 (SDEDDDDSTFSDKNSKDFKETEDMNGAEDMHGRAPQITKDNLNLTTTDSPMSEAEPVS) is disordered. Residue threonine 419 is modified to Phosphothreonine. Residues 423 to 442 (KNSKDFKETEDMNGAEDMHG) show a composition bias toward basic and acidic residues. 4 positions are modified to phosphoserine: serine 425, serine 459, serine 468, and serine 491. A compositionally biased stretch (polar residues) spans 448–460 (TKDNLNLTTTDSP). Phosphothreonine is present on threonine 493. Serine 494 is subject to Phosphoserine. Over residues 690-700 (ELESNSSDDDV) the composition is skewed to acidic residues. Disordered stretches follow at residues 690 to 745 (ELES…DQDN) and 757 to 838 (ISDN…NHGK). A phosphoserine mark is found at serine 711 and serine 713. Positions 714 to 723 (NDEDDGNDED) are enriched in acidic residues. Positions 724–734 (PLSREMSRRLS) are enriched in basic and acidic residues. Acidic residues-rich tracts occupy residues 768 to 779 (SDEDDDDDDEVV) and 806 to 818 (SDSE…DSSD).

The protein belongs to the SAPS family. In terms of assembly, interacts with ppe1 and mis12.

The protein localises to the nucleus. Its function is as follows. Has a role in chromosome segregation. May provide a dynamic connection between kinetochore microtubules and kinetochore chromatin. The chain is Extragenic suppressor of kinetochore protein 1 (ekc1) from Schizosaccharomyces pombe (strain 972 / ATCC 24843) (Fission yeast).